A 363-amino-acid polypeptide reads, in one-letter code: MEASQVEFEHPRKAFGWAARDSSGLLSPFNFSRRDIGEEDVALEVLYCGICHTDLHMAKNDFGNSIYPYVPGHEVIGIVAEVGSKVEKYKVGDKVGVGYFVESCRSCQNCIDNLENYCPKHILTQGDKHIDGTTTYGGYSDSMVVDEHFVTRIPEGLPLDGCGSSSLCWGYSHSPLKYYGLDKPGLHVGVVGLGGLGHMVAKFAKTHGLKITVISTSPPTKKEEAIKNLGADSFLVSRDPDQMEAPKETLDGIIDTVSADHSIVPLIGLLKSHGKLVLIGAIEKPLELPPFPLILGRKLVGGTLVGGLKETQEMIDFSPKHNVKPEIEVVPMDYVNIAMQRLAKADVKYRFVIDVANTLKPTS.

Positions 51, 73, 104, 107, 110, 118, and 168 each coordinate Zn(2+).

The protein belongs to the zinc-containing alcohol dehydrogenase family. Zn(2+) is required as a cofactor.

It catalyses the reaction D-mannitol + NAD(+) = D-mannose + NADH + H(+). Its function is as follows. Oxidizes mannitol to mannose. Provides the initial step by which translocated mannitol is committed to central metabolism and, by regulating mannitol pool size, is important in regulating salt tolerance at the cellular level. This chain is Probable mannitol dehydrogenase 3 (CAD3), found in Stylosanthes humilis (Townsville stylo).